Here is a 323-residue protein sequence, read N- to C-terminus: MAASARGSGRAPTRRLLVLLLLPLLWAPAGVRAGPEEDLSHRNQEPPAPAQQLQPQPAAVQGLEPARAEKGFTPAAPVHTNREDAATQANLGFIHAFVAAISVIIVSELGDKTFFIAAIMAMRYNRLTVLAGAMLALALMTCLSVLFGYATTVIPRVYTYYVSTALFAIFGIRMLREGLKMSPDEGQEELEEVQAELKKKDEEFQRTKLLNGPDVETGTSTAIPQKKWLHFISPIFVQALTLTFLAEWGDRSQLTTIVLAAREDPYGVAVGGTVGHCLCTGLAVIGGRMIAQKISVRTVTIIGGIVFLAFAFSALFISPESGF.

The signal sequence occupies residues 1 to 33; that stretch reads MAASARGSGRAPTRRLLVLLLLPLLWAPAGVRA. Residues 34-88 are Lumenal-facing; that stretch reads GPEEDLSHRNQEPPAPAQQLQPQPAAVQGLEPARAEKGFTPAAPVHTNREDAATQ. The segment covering 35 to 44 has biased composition (basic and acidic residues); sequence PEEDLSHRNQ. A disordered region spans residues 35–60; sequence PEEDLSHRNQEPPAPAQQLQPQPAAV. Residues 50–59 are compositionally biased toward low complexity; the sequence is AQQLQPQPAA. Residues 89–109 form a helical membrane-spanning segment; sequence ANLGFIHAFVAAISVIIVSEL. Over 110–126 the chain is Cytoplasmic; that stretch reads GDKTFFIAAIMAMRYNR. A helical transmembrane segment spans residues 127 to 147; the sequence is LTVLAGAMLALALMTCLSVLF. Residues 148–151 lie on the Lumenal side of the membrane; the sequence is GYAT. A helical transmembrane segment spans residues 152 to 172; that stretch reads TVIPRVYTYYVSTALFAIFGI. Residues 173–227 are Cytoplasmic-facing; it reads RMLREGLKMSPDEGQEELEEVQAELKKKDEEFQRTKLLNGPDVETGTSTAIPQKK. A coiled-coil region spans residues 184 to 211; the sequence is DEGQEELEEVQAELKKKDEEFQRTKLLN. The chain crosses the membrane as a helical span at residues 228 to 248; that stretch reads WLHFISPIFVQALTLTFLAEW. At 249-266 the chain is on the lumenal side; sequence GDRSQLTTIVLAAREDPY. Residues 267-287 traverse the membrane as a helical segment; sequence GVAVGGTVGHCLCTGLAVIGG. Topologically, residues 288 to 298 are cytoplasmic; sequence RMIAQKISVRT. Residues 299-319 form a helical membrane-spanning segment; that stretch reads VTIIGGIVFLAFAFSALFISP. The Lumenal portion of the chain corresponds to 320 to 323; that stretch reads ESGF.

Belongs to the GDT1 family.

It is found in the golgi apparatus membrane. It carries out the reaction Ca(2+)(in) + n H(+)(out) = Ca(2+)(out) + n H(+)(in). It catalyses the reaction Mn(2+)(in) + n H(+)(out) = Mn(2+)(out) + n H(+)(in). Its function is as follows. Putative divalent cation:proton antiporter that exchanges calcium or manganese ions for protons across the Golgi membrane. Mediates the reversible transport of calcium or manganese to the Golgi lumen driven by the proton gradient and possibly the membrane potential generated by V-ATPase. Provides calcium or manganese cofactors to resident Golgi enzymes and contributes to the maintenance of an acidic luminal Golgi pH required for proper functioning of the secretory pathway. Promotes Ca(2+) storage within the Golgi lumen of the mammary epithelial cells to be then secreted into milk. The transport mechanism and stoichiometry remains to be elucidated. This is Putative divalent cation/proton antiporter TMEM165 from Rattus norvegicus (Rat).